A 425-amino-acid polypeptide reads, in one-letter code: Glutamyl-tRNA reductase (425 aa).

Substrate contacts are provided by residues 49-52, serine 109, 114-116, and glutamine 120; these read TCNR and EGQ. The Nucleophile role is filled by cysteine 50. 189 to 194 contacts NADP(+); sequence GAGKMS.

This sequence belongs to the glutamyl-tRNA reductase family. In terms of assembly, homodimer.

The enzyme catalyses (S)-4-amino-5-oxopentanoate + tRNA(Glu) + NADP(+) = L-glutamyl-tRNA(Glu) + NADPH + H(+). It participates in porphyrin-containing compound metabolism; protoporphyrin-IX biosynthesis; 5-aminolevulinate from L-glutamyl-tRNA(Glu): step 1/2. Its pathway is porphyrin-containing compound metabolism; chlorophyll biosynthesis. Catalyzes the NADPH-dependent reduction of glutamyl-tRNA(Glu) to glutamate 1-semialdehyde (GSA). In Picosynechococcus sp. (strain ATCC 27264 / PCC 7002 / PR-6) (Agmenellum quadruplicatum), this protein is Glutamyl-tRNA reductase.